Here is a 352-residue protein sequence, read N- to C-terminus: MSKQPSLSYKDAGVDIDAGEALVERIKSVAKRTKRPEVMGGLGGFGALCEIPAGYKQPVLVSGTDGVGTKLRLALNLNKHDTIGIDLVAMCVNDLVVCGAEPLFFLDYYATGKLNVDTAAQVVTGIGAGCELAGCSLVGGETAEMPGMYEGEDYDLAGFCVGVVEKAEIIDGSKVAAGDALLALPSSGPHSNGYSLIRKIIEVAGADIESIQLDGKPLTELLMAPTRIYVKPLLKLIKETGAVKAMAHITGGGLLDNIPRVLPEGAQAVVDVASWQRPAVFDWLQQQGNVAENEMHRVLNCGVGMVICVAQEHVEAALKVLREAGEQPWVIGQIATAAEGAAQVELKNLKAH.

This sequence belongs to the AIR synthase family.

The protein localises to the cytoplasm. The enzyme catalyses 2-formamido-N(1)-(5-O-phospho-beta-D-ribosyl)acetamidine + ATP = 5-amino-1-(5-phospho-beta-D-ribosyl)imidazole + ADP + phosphate + H(+). Its pathway is purine metabolism; IMP biosynthesis via de novo pathway; 5-amino-1-(5-phospho-D-ribosyl)imidazole from N(2)-formyl-N(1)-(5-phospho-D-ribosyl)glycinamide: step 2/2. The chain is Phosphoribosylformylglycinamidine cyclo-ligase from Pseudomonas savastanoi pv. phaseolicola (strain 1448A / Race 6) (Pseudomonas syringae pv. phaseolicola (strain 1448A / Race 6)).